Here is a 609-residue protein sequence, read N- to C-terminus: UvrABC system protein C (609 aa).

One can recognise a GIY-YIG domain in the interval His-13–Val-91. In terms of domain architecture, UVR spans Gln-201–Val-236.

This sequence belongs to the UvrC family. As to quaternary structure, interacts with UvrB in an incision complex.

It localises to the cytoplasm. In terms of biological role, the UvrABC repair system catalyzes the recognition and processing of DNA lesions. UvrC both incises the 5' and 3' sides of the lesion. The N-terminal half is responsible for the 3' incision and the C-terminal half is responsible for the 5' incision. In Histophilus somni (strain 2336) (Haemophilus somnus), this protein is UvrABC system protein C.